The following is a 305-amino-acid chain: Carbamate kinase (305 aa).

It belongs to the carbamate kinase family.

The protein resides in the cytoplasm. It carries out the reaction hydrogencarbonate + NH4(+) + ATP = carbamoyl phosphate + ADP + H2O + H(+). The protein operates within metabolic intermediate metabolism; carbamoyl phosphate degradation; CO(2) and NH(3) from carbamoyl phosphate: step 1/1. This chain is Carbamate kinase (arcC), found in Thermoplasma volcanium (strain ATCC 51530 / DSM 4299 / JCM 9571 / NBRC 15438 / GSS1).